Consider the following 241-residue polypeptide: uncharacterized protein (241 aa).

6 consecutive transmembrane segments (helical) span residues 1-21, 43-63, 75-95, 108-128, 160-180, and 200-220; these read MMMALQIFIKILPIMFFGILL, FPIIAVFFVSSTSGSFLLKNL, LPIYFLGMFVFGIHIILFYAI, IYVLIKFLVTCNYLIISVLML, VLTSFVPSVLIITYLIEHGLL, and ILVIVLTGLATISGAIGIASG.

It to M.jannaschii MJ0871, MJ0880 and MJ1556.

Its subcellular location is the cell membrane. This is an uncharacterized protein from Methanocaldococcus jannaschii (strain ATCC 43067 / DSM 2661 / JAL-1 / JCM 10045 / NBRC 100440) (Methanococcus jannaschii).